The chain runs to 182 residues: Protein Syd (182 aa).

This sequence belongs to the Syd family.

The protein resides in the cell inner membrane. Interacts with the SecY protein in vivo. May bind preferentially to an uncomplexed state of SecY, thus functioning either as a chelating agent for excess SecY in the cell or as a regulatory factor that negatively controls the translocase function. The chain is Protein Syd from Aeromonas salmonicida (strain A449).